Here is a 416-residue protein sequence, read N- to C-terminus: MANLEKKRVVVTGLGAITPIGNTLQDYWQGLMEGRNGIGPITRFDASDQACRFGGEVKDFDATQFLDRKEAKRMDRFCHFAVCASQQAINDAKLVINELNADEIGVLIGTGIGGLKVLEDQQTILLDKGPSRCSPFMIPMMIANMASGLTAINLGAKGPNNCTVTACAAGSNAIGDAFRLVQNGYAKAMICGGTEAAITPLSYAGFASARALSFRNDDPLHASRPFDKDRDGFVMGEGSGILILEELESALARGAKIYGEMVGYAMTCDAYHITAPVPDGRGATRAIAWALKDSGLKPEMVSYINAHGTSTPANDVTETRAIKQALGNHAYNIAVSSTKSMTGHLLGGSGGIEAVATVMAIAEDKVPPTINLENPDPECDLDYVPGQSRALIVDVALSNSFGFGGHNVTLAFKKYQ.

In terms of domain architecture, Ketosynthase family 3 (KS3) spans 6–414 (KKRVVVTGLG…GHNVTLAFKK (409 aa)). Residues C167, H307, and H344 each act as for beta-ketoacyl synthase activity in the active site.

The protein belongs to the thiolase-like superfamily. Beta-ketoacyl-ACP synthases family. Homodimer.

The catalysed reaction is a fatty acyl-[ACP] + malonyl-[ACP] + H(+) = a 3-oxoacyl-[ACP] + holo-[ACP] + CO2. The enzyme catalyses (9Z)-hexadecenoyl-[ACP] + malonyl-[ACP] + H(+) = 3-oxo-(11Z)-octadecenoyl-[ACP] + holo-[ACP] + CO2. The protein operates within lipid metabolism; fatty acid biosynthesis. In terms of biological role, involved in the type II fatty acid elongation cycle. Catalyzes the elongation of a wide range of acyl-ACP by the addition of two carbons from malonyl-ACP to an acyl acceptor. Can efficiently catalyze the conversion of palmitoleoyl-ACP (cis-hexadec-9-enoyl-ACP) to cis-vaccenoyl-ACP (cis-octadec-11-enoyl-ACP), an essential step in the thermal regulation of fatty acid composition. In Synechocystis sp. (strain ATCC 27184 / PCC 6803 / Kazusa), this protein is 3-oxoacyl-[acyl-carrier-protein] synthase 2 (fabF).